A 588-amino-acid polypeptide reads, in one-letter code: Cation channel sperm-associated protein 2 (588 aa).

Residues 1–106 lie on the Cytoplasmic side of the membrane; it reads MAQEQGHFQL…LWAGWVLDSS (106 aa). The chain crosses the membrane as a helical span at residues 107-129; sequence VFSKFIISLIFLNTFVLMVEIEL. The Extracellular segment spans residues 130–138; the sequence is MESTNTALW. Residues 139 to 164 traverse the membrane as a helical segment; sequence PVKLALEVADWFILLSFIVEILLMWL. The Cytoplasmic portion of the chain corresponds to 165–173; the sequence is ASFSLFWKD. Residues 174–198 traverse the membrane as a helical segment; it reads AWNVFDFFVTLLSLLPELVVLLGVP. Residues 199 to 201 lie on the Extracellular side of the membrane; that stretch reads AHS. Residues 202 to 220 traverse the membrane as a helical segment; sequence VWLQLLRVCRVLRSLKLFA. Residues 221 to 237 are Cytoplasmic-facing; it reads RFRQIKVILLALVRALK. Residues 238-260 traverse the membrane as a helical segment; it reads SMTFLLMLLLIFFYIFAVTGVYF. The Extracellular segment spans residues 261 to 279; sequence FREYSRSTIEGLEYNMFFS. Positions 280-292 form an intramembrane region, helical; Pore-forming; that stretch reads DLLNSLVTVFILF. At 293–312 the chain is on the extracellular side; it reads TLDHWYAVLQDIWKVPESSR. The helical transmembrane segment at 313-339 threads the bilayer; that stretch reads VFSSIYVILWLLLGSIIFRNIIVAMMV. Residues 340–588 lie on the Cytoplasmic side of the membrane; that stretch reads TNFQNIRSEL…VQALMSFEDK (249 aa). Residues 376-512 form a disordered region; the sequence is SESLRGTSLG…YPVSHSISSH (137 aa). The span at 390 to 439 shows a compositional bias: acidic residues; the sequence is DIIETSDASDDDDDDDDDDDDDDDDDDDKSDATESDNEESDSENSESENS. The span at 440–502 shows a compositional bias: basic and acidic residues; it reads ESEKIDPEKD…KVKEESKEKA (63 aa).

This sequence belongs to the cation channel sperm-associated (TC 1.A.1.19) family. As to quaternary structure, component of the CatSper complex or CatSpermasome composed of the core pore-forming members CATSPER1, CATSPER2, CATSPER3 and CATSPER4 as well as auxiliary members CATSPERB, CATSPERG2, CATSPERD, CATSPERE, CATSPERZ, C2CD6/CATSPERT, SLCO6C1, TMEM249, TMEM262 and EFCAB9. HSPA1 may be an additional auxiliary complex member. The core complex members CATSPER1, CATSPER2, CATSPER3 and CATSPER4 form a heterotetrameric channel. The auxiliary CATSPERB, CATSPERG2, CATSPERD and CATSPERE subunits form a pavilion-like structure over the pore which stabilizes the complex through interactions with CATSPER4, CATSPER3, CATSPER1 and CATSPER2 respectively. SLCO6C1 interacts with CATSPERE and TMEM262/CATSPERH interacts with CATSPERB, further stabilizing the complex. C2CD6/CATSPERT interacts at least with CATSPERD and is required for targeting the CatSper complex in the flagellar membrane. Interacts with Ca(v)3.3/CACNA1I, leading to suppression of T-type calcium channel activity. As to expression, testis-specific.

The protein localises to the cell projection. Its subcellular location is the cilium. It is found in the flagellum membrane. It carries out the reaction Ca(2+)(in) = Ca(2+)(out). Its activity is regulated as follows. In contrast to the human ortholog, not activated by progesterone. Activated by intracellular alkalinization. Functionally, pore-forming subunit of the CatSper complex, a sperm-specific voltage-gated calcium channel that plays a central role in sperm cell hyperactivation. Controls calcium entry to mediate the hyperactivated motility, a step needed for sperm motility which is essential late in the preparation of sperm for fertilization. This chain is Cation channel sperm-associated protein 2 (Catsper2), found in Mus musculus (Mouse).